Here is a 208-residue protein sequence, read N- to C-terminus: Small ribosomal subunit protein uS4 (208 aa).

Residues 98 to 161 (RRLDNVIYRL…RKIPVLAEAQ (64 aa)) enclose the S4 RNA-binding domain.

This sequence belongs to the universal ribosomal protein uS4 family. As to quaternary structure, part of the 30S ribosomal subunit. Contacts protein S5. The interaction surface between S4 and S5 is involved in control of translational fidelity.

Its function is as follows. One of the primary rRNA binding proteins, it binds directly to 16S rRNA where it nucleates assembly of the body of the 30S subunit. In terms of biological role, with S5 and S12 plays an important role in translational accuracy. The polypeptide is Small ribosomal subunit protein uS4 (Nitratidesulfovibrio vulgaris (strain ATCC 29579 / DSM 644 / CCUG 34227 / NCIMB 8303 / VKM B-1760 / Hildenborough) (Desulfovibrio vulgaris)).